We begin with the raw amino-acid sequence, 430 residues long: Trigger factor (430 aa).

The region spanning 163 to 248 (GNIAIIDFKG…IKDIKVKELP (86 aa)) is the PPIase FKBP-type domain.

This sequence belongs to the FKBP-type PPIase family. Tig subfamily.

The protein resides in the cytoplasm. It carries out the reaction [protein]-peptidylproline (omega=180) = [protein]-peptidylproline (omega=0). Its function is as follows. Involved in protein export. Acts as a chaperone by maintaining the newly synthesized protein in an open conformation. Functions as a peptidyl-prolyl cis-trans isomerase. This Clostridium botulinum (strain Kyoto / Type A2) protein is Trigger factor.